The sequence spans 507 residues: ATP synthase subunit alpha, chloroplastic (507 aa).

An ATP-binding site is contributed by 170–177 (GDRQTGKT).

It belongs to the ATPase alpha/beta chains family. F-type ATPases have 2 components, CF(1) - the catalytic core - and CF(0) - the membrane proton channel. CF(1) has five subunits: alpha(3), beta(3), gamma(1), delta(1), epsilon(1). CF(0) has four main subunits: a, b, b' and c.

It localises to the plastid. It is found in the chloroplast thylakoid membrane. The enzyme catalyses ATP + H2O + 4 H(+)(in) = ADP + phosphate + 5 H(+)(out). Its function is as follows. Produces ATP from ADP in the presence of a proton gradient across the membrane. The alpha chain is a regulatory subunit. The protein is ATP synthase subunit alpha, chloroplastic of Ranunculus macranthus (Large buttercup).